Consider the following 250-residue polypeptide: Large ribosomal subunit protein uL13c (250 aa).

Residues 1-47 (MATMACASSLTFPSAQTQKSFFGTNVKQTPVLSFPRPTVAAAVAVSA) constitute a chloroplast transit peptide.

As to quaternary structure, component of the chloroplast large ribosomal subunit (LSU). Mature 70S chloroplast ribosomes of higher plants consist of a small (30S) and a large (50S) subunit. The 30S small subunit contains 1 molecule of ribosomal RNA (16S rRNA) and 24 different proteins. The 50S large subunit contains 3 rRNA molecules (23S, 5S and 4.5S rRNA) and 33 different proteins.

Its subcellular location is the plastid. It localises to the chloroplast. Its function is as follows. Component of the chloroplast ribosome (chloro-ribosome), a dedicated translation machinery responsible for the synthesis of chloroplast genome-encoded proteins, including proteins of the transcription and translation machinery and components of the photosynthetic apparatus. This is Large ribosomal subunit protein uL13c (RPL13) from Spinacia oleracea (Spinach).